Here is a 185-residue protein sequence, read N- to C-terminus: MENVNLTNHFLIAMPGMVDPNFNGTLTYICDHSDQGALGVVVNRPIDLDLSTLFEQIGLSLPEGLHGEIVYFGGPVQTERGFVLHTPPLTFSSTLTVNDAVSLTTSKDVLEAVSQGAGPEKFIVSLGYAGWSAGQLEDELKQNAWLSVAADPQVIFDLAPEERLPAAMKLLGIDFASLSDEAGHA.

Belongs to the UPF0301 (AlgH) family.

The chain is UPF0301 protein Tbd_2579 from Thiobacillus denitrificans (strain ATCC 25259 / T1).